Reading from the N-terminus, the 354-residue chain is Guanine nucleotide-binding protein G(i) subunit alpha-1 (354 aa).

A lipid anchor (N-myristoyl glycine) is attached at Gly-2. Cys-3 carries S-palmitoyl cysteine lipidation. One can recognise a G-alpha domain in the interval 32-354; the sequence is REVKLLLLGA…KNNLKDCGLF (323 aa). The interval 35–48 is G1 motif; it reads KLLLLGAGESGKST. Residues 43-48, 150-151, and 175-178 each bind GTP; these read ESGKST, DS, and LRTR. Ser-47 provides a ligand contact to Mg(2+). Residues 173 to 181 are G2 motif; it reads DVLRTRVKT. Residue Thr-181 coordinates Mg(2+). The tract at residues 196–205 is G3 motif; it reads FKMFDVGGQR. GTP-binding positions include 200–204, 269–272, and Ala-326; these read DVGGQ and NKKD. Positions 265 to 272 are G4 motif; that stretch reads ILFLNKKD. Residues 324–329 are G5 motif; sequence TCATDT.

Belongs to the G-alpha family. G(i/o/t/z) subfamily. In terms of assembly, heterotrimeric G proteins are composed of 3 units; alpha, beta and gamma. The alpha chain contains the guanine nucleotide binding site. Part of a spindle orientation complex at least composed of GNAI1, GPSM2 and NUMA1. Identified in complex with the beta subunit GNB1 and the gamma subunit GNG1. Identified in complex with the beta subunit GNB1 and the gamma subunit GNG2. Component of the TAS2R14-GNAI1 complex, consisting of TAS2R14, GNAI1, GNB1 and GNG2; within the complex interacts with TAS2R14; this complex plays a role in the perception of bitterness. GTP binding causes dissociation of the heterotrimer, liberating the individual subunits so that they can interact with downstream effector proteins. Interacts (GDP-bound form) with GPSM1; this inhibits guanine nucleotide exchange and GTP binding. Interacts (GDP-bound form) with GPSM2 (via GoLoco domains); this inhibits guanine nucleotide exchange. Interacts with RGS10; this strongly enhances GTP hydrolysis. Interacts with RGS1 and RGS16. Interacts with RGS4. Interacts with RGS12. Interacts (via active GTP- or inactive GDP-bound forms) with RGS14 (via RGS and GoLoco domains). Interacts with RGS3, RGS6, RGS7, RGS8, RGS17, RGS18 and RGS20 (in vitro). Interacts (GDP-bound form) with RIC8A (via C-terminus); promoting GNAI1 folding and association with the plasma membrane. Interacts (inactive GDP-bound form) with NUCB1 (via GBA motif); the interaction leads to activation of GNAI1. Interacts (inactive GDP-bound form) with CCDC88C/DAPLE (via GBA motif); the interaction leads to activation of GNAI1. Interacts (inactive GDP-bound form) with CCDC8A/GIV (via GBA motif). Interacts with GPR15. Myristoylation at Gly-2 is required for membrane anchoring before palmitoylation. In terms of processing, palmitoylation at Cys-3 varies with membrane lipid composition.

It is found in the nucleus. It localises to the cytoplasm. Its subcellular location is the cell membrane. The protein localises to the cytoskeleton. The protein resides in the microtubule organizing center. It is found in the centrosome. It localises to the cell cortex. Its subcellular location is the membrane. It catalyses the reaction GTP + H2O = GDP + phosphate + H(+). Functionally, guanine nucleotide-binding proteins (G proteins) function as transducers downstream of G protein-coupled receptors (GPCRs) in numerous signaling cascades. The alpha chain contains the guanine nucleotide binding site and alternates between an active, GTP-bound state and an inactive, GDP-bound state. Signaling by an activated GPCR promotes GDP release and GTP binding. The alpha subunit has a low GTPase activity that converts bound GTP to GDP, thereby terminating the signal. Both GDP release and GTP hydrolysis are modulated by numerous regulatory proteins. Signaling is mediated via effector proteins, such as adenylate cyclase. Inhibits adenylate cyclase activity of ADCY1, ADCY5 and ADCY6, leading to decreased intracellular cAMP levels. The inactive GDP-bound form prevents the association of RGS14 with centrosomes and is required for the translocation of RGS14 from the cytoplasm to the plasma membrane. Required for normal cytokinesis during mitosis. Required for cortical dynein-dynactin complex recruitment during metaphase. In Rattus norvegicus (Rat), this protein is Guanine nucleotide-binding protein G(i) subunit alpha-1 (Gnai1).